The sequence spans 210 residues: Ribosomal RNA small subunit methyltransferase G (210 aa).

Residues glycine 77, phenylalanine 82, 100 to 102 (ERS), 128 to 129 (VE), and arginine 141 contribute to the S-adenosyl-L-methionine site.

The protein belongs to the methyltransferase superfamily. RNA methyltransferase RsmG family.

The protein resides in the cytoplasm. Its function is as follows. Specifically methylates the N7 position of a guanine in 16S rRNA. The chain is Ribosomal RNA small subunit methyltransferase G from Borrelia duttonii (strain Ly).